Reading from the N-terminus, the 747-residue chain is Kinesin-like protein KIF3B (747 aa).

Met-1 is modified (N-acetylmethionine). Ser-2 carries the post-translational modification N-acetylserine; in Kinesin-like protein KIF3B, N-terminally processed. One can recognise a Kinesin motor domain in the interval 9–340 (SVRVVVRCRP…LRYANRAKNI (332 aa)). Position 96-103 (96-103 (GQTGTGKT)) interacts with ATP. Residues 346-579 (VNEDPKDALL…EQTQNELTRE (234 aa)) are a coiled coil. Disordered regions lie at residues 374 to 412 (IGRRKRREKRREGGGSGGGGEEEEEEGEEGEEDGDDKDD) and 698 to 747 (IQVD…LVPK). A compositionally biased stretch (acidic residues) spans 393–411 (GEEEEEEGEEGEEDGDDKD). The tract at residues 580 to 747 (LKLKHLIIEN…YPQSRGLVPK (168 aa)) is globular. A compositionally biased stretch (polar residues) spans 701–710 (DASSFESTAS). The span at 711–721 (RKPKARPKSGR) shows a compositional bias: basic residues. The span at 722-735 (KSGSSSSSSGNPAS) shows a compositional bias: low complexity.

It belongs to the TRAFAC class myosin-kinesin ATPase superfamily. Kinesin family. Kinesin II subfamily. As to quaternary structure, heterodimer of KIF3A and KIF3B. KIF3A/KIF3B heterodimer interacts with KIFAP3 forming a heterotrimeric (KIF3A/KIF3B/KIFAP3) complex. Interacts with the SMC3 subunit of the cohesin complex. Interacts directly with IFT20. Interacts with FLCN.

It localises to the cytoplasm. Its subcellular location is the cytoskeleton. The protein localises to the cell projection. It is found in the cilium. The protein resides in the dendritic spine. In terms of biological role, microtubule-based molecular motor that transport intracellular cargos, such as vesicles, organelles and protein complexes. Uses ATP hydrolysis to generate force to bind and move along the microtubule. Plays a role in cilia formation. Involved in photoreceptor integrity and opsin trafficking in rod photoreceptors. Transports vesicles containing N-methyl-D-aspartate (NMDA) receptor subunit GRIN2A into neuronal dendrites. This Mus musculus (Mouse) protein is Kinesin-like protein KIF3B.